Here is a 152-residue protein sequence, read N- to C-terminus: Superoxide dismutase [Cu-Zn] (152 aa).

Cys-7 carries S-palmitoyl cysteine lipidation. Positions 47, 49, and 64 each coordinate Cu cation. Cys-58 and Cys-146 are oxidised to a cystine. Positions 64, 72, 81, and 84 each coordinate Zn(2+). Residue His-120 coordinates Cu cation.

The protein belongs to the Cu-Zn superoxide dismutase family. Homodimer. It depends on Cu cation as a cofactor. Zn(2+) serves as cofactor.

The protein localises to the cytoplasm. The protein resides in the nucleus. The catalysed reaction is 2 superoxide + 2 H(+) = H2O2 + O2. Destroys radicals which are normally produced within the cells and which are toxic to biological systems. The protein is Superoxide dismutase [Cu-Zn] (sod1) of Xiphias gladius (Swordfish).